The chain runs to 210 residues: Large ribosomal subunit protein uL3 (210 aa).

It belongs to the universal ribosomal protein uL3 family. In terms of assembly, part of the 50S ribosomal subunit. Forms a cluster with proteins L14 and L19.

One of the primary rRNA binding proteins, it binds directly near the 3'-end of the 23S rRNA, where it nucleates assembly of the 50S subunit. This is Large ribosomal subunit protein uL3 from Natranaerobius thermophilus (strain ATCC BAA-1301 / DSM 18059 / JW/NM-WN-LF).